Reading from the N-terminus, the 344-residue chain is D-arabinose dehydrogenase [NAD(P)+] heavy chain (344 aa).

Residue Tyr71 is the Proton donor of the active site. His131 lines the substrate pocket. Thr151 carries the post-translational modification Phosphothreonine. 241 to 295 (SPLGSHGAPNLKIPLVKKLAEKYNVTGNDLLISYHIRQGTIVIPRSLNPVRISSS) lines the NADP(+) pocket.

It belongs to the aldo/keto reductase family. As to quaternary structure, heterodimer of a heavy chain and a light chain.

The protein resides in the cytoplasm. It catalyses the reaction D-arabinose + NADP(+) = D-arabinono-1,4-lactone + NADPH + H(+). It carries out the reaction D-arabinose + NAD(+) = D-arabinono-1,4-lactone + NADH + H(+). Catalyzes the oxidation of D-arabinose, L-xylose, L-fucose and L-galactose in the presence of NADP(+). The sequence is that of D-arabinose dehydrogenase [NAD(P)+] heavy chain (ARA1) from Saccharomyces cerevisiae (strain ATCC 204508 / S288c) (Baker's yeast).